The primary structure comprises 630 residues: Probable potassium transport system protein Kup 2 (630 aa).

The next 12 membrane-spanning stretches (helical) occupy residues 14-34, 56-76, 108-128, 145-165, 176-196, 214-234, 255-275, 293-313, 352-372, 375-395, 402-422, and 427-447; these read ATGF…DIGT, VIVL…VTAK, VPLL…SMIT, PALQ…LFAF, AFGP…LLHI, FMLS…LAVT, WLFF…AMVL, LLVP…QAVI, MLLL…SALA, YGIA…VVVW, PAAA…FFSA, and LMEG…LVWT.

This sequence belongs to the HAK/KUP transporter (TC 2.A.72) family.

Its subcellular location is the cell inner membrane. It carries out the reaction K(+)(in) + H(+)(in) = K(+)(out) + H(+)(out). In terms of biological role, transport of potassium into the cell. Likely operates as a K(+):H(+) symporter. This Rhodopseudomonas palustris (strain BisA53) protein is Probable potassium transport system protein Kup 2.